Consider the following 159-residue polypeptide: Serine-protein kinase RsbW (159 aa).

This sequence belongs to the anti-sigma-factor family.

It carries out the reaction L-seryl-[protein] + ATP = O-phospho-L-seryl-[protein] + ADP + H(+). The enzyme catalyses L-threonyl-[protein] + ATP = O-phospho-L-threonyl-[protein] + ADP + H(+). Its function is as follows. Negative regulator of sigma-B activity. Phosphorylates and inactivates its specific antagonist protein, RsbV. Upon phosphorylation of RsbV, RsbW is released and binds to sigma-B, thereby blocking its ability to form an RNA polymerase holoenzyme (E-sigma-B). This is Serine-protein kinase RsbW from Staphylococcus aureus (strain MSSA476).